A 136-amino-acid chain; its full sequence is Holo-[acyl-carrier-protein] synthase (136 aa).

Mg(2+) is bound by residues Asp-8 and Glu-57.

Belongs to the P-Pant transferase superfamily. AcpS family. Mg(2+) serves as cofactor.

The protein resides in the cytoplasm. The enzyme catalyses apo-[ACP] + CoA = holo-[ACP] + adenosine 3',5'-bisphosphate + H(+). In terms of biological role, transfers the 4'-phosphopantetheine moiety from coenzyme A to a Ser of acyl-carrier-protein. The sequence is that of Holo-[acyl-carrier-protein] synthase from Methylorubrum populi (strain ATCC BAA-705 / NCIMB 13946 / BJ001) (Methylobacterium populi).